The sequence spans 249 residues: Tetrahydromethanopterin S-methyltransferase subunit D (249 aa).

A run of 6 helical transmembrane segments spans residues 9–29 (ILWL…VHFV), 47–67 (GTVQ…GFMM), 75–95 (LILA…MIVG), 138–158 (VSFV…ALVY), 183–203 (LVGI…VIPS), and 224–244 (AVIS…IAIS).

This sequence belongs to the MtrD family. The complex is composed of 8 subunits; MtrA, MtrB, MtrC, MtrD, MtrE, MtrF, MtrG and MtrH.

It is found in the cell membrane. It carries out the reaction 5-methyl-5,6,7,8-tetrahydromethanopterin + coenzyme M + 2 Na(+)(in) = 5,6,7,8-tetrahydromethanopterin + methyl-coenzyme M + 2 Na(+)(out). Its pathway is one-carbon metabolism; methanogenesis from CO(2); methyl-coenzyme M from 5,10-methylene-5,6,7,8-tetrahydromethanopterin: step 2/2. In terms of biological role, part of a complex that catalyzes the formation of methyl-coenzyme M and tetrahydromethanopterin from coenzyme M and methyl-tetrahydromethanopterin. This is an energy-conserving, sodium-ion translocating step. This is Tetrahydromethanopterin S-methyltransferase subunit D from Methanosarcina acetivorans (strain ATCC 35395 / DSM 2834 / JCM 12185 / C2A).